The chain runs to 160 residues: Transcription elongation factor GreA (160 aa).

Belongs to the GreA/GreB family.

Its function is as follows. Necessary for efficient RNA polymerase transcription elongation past template-encoded arresting sites. The arresting sites in DNA have the property of trapping a certain fraction of elongating RNA polymerases that pass through, resulting in locked ternary complexes. Cleavage of the nascent transcript by cleavage factors such as GreA or GreB allows the resumption of elongation from the new 3'terminus. GreA releases sequences of 2 to 3 nucleotides. The sequence is that of Transcription elongation factor GreA from Francisella tularensis subsp. tularensis (strain FSC 198).